The sequence spans 928 residues: Serine/threonine-protein kinase atg1 (928 aa).

One can recognise a Protein kinase domain in the interval 6–315 (YTRLDEIGRG…FPEFFENEVI (310 aa)). Residues 12 to 20 (IGRGSFATV) and Lys-35 each bind ATP. Catalysis depends on Asp-149, which acts as the Proton acceptor. Disordered stretches follow at residues 318–470 (PIPG…EQER) and 544–571 (FSGRSRADSTHHRQASYERRYGQSPTSA). Residues 359–371 (TRREREVNREDVY) show a composition bias toward basic and acidic residues. The segment covering 437–452 (TTTAIERQRSRNTYSE) has biased composition (polar residues). Basic and acidic residues-rich tracts occupy residues 459–470 (QPADKLKEEQER) and 548–564 (SRADSTHHRQASYERRY).

It belongs to the protein kinase superfamily. Ser/Thr protein kinase family. APG1/unc-51/ULK1 subfamily. Homodimer. Forms a ternary complex with ATG13 and ATG17.

The protein localises to the cytoplasm. It is found in the preautophagosomal structure membrane. The catalysed reaction is L-seryl-[protein] + ATP = O-phospho-L-seryl-[protein] + ADP + H(+). It carries out the reaction L-threonyl-[protein] + ATP = O-phospho-L-threonyl-[protein] + ADP + H(+). In terms of biological role, serine/threonine protein kinase involved in the cytoplasm to vacuole transport (Cvt) and found to be essential in autophagy, where it is required for the formation of autophagosomes. Involved in the clearance of protein aggregates which cannot be efficiently cleared by the proteasome. Required for selective autophagic degradation of the nucleus (nucleophagy) as well as for mitophagy which contributes to regulate mitochondrial quantity and quality by eliminating the mitochondria to a basal level to fulfill cellular energy requirements and preventing excess ROS production. Also involved in endoplasmic reticulum-specific autophagic process, in selective removal of ER-associated degradation (ERAD) substrates. Plays a key role in ATG9 and ATG23 cycling through the pre-autophagosomal structure and is necessary to promote ATG18 binding to ATG9 through phosphorylation of ATG9. Catalyzes phosphorylation of ATG4, decreasing the interaction between ATG4 and ATG8 and impairing deconjugation of PE-conjugated forms of ATG8. This chain is Serine/threonine-protein kinase atg1, found in Aspergillus clavatus (strain ATCC 1007 / CBS 513.65 / DSM 816 / NCTC 3887 / NRRL 1 / QM 1276 / 107).